The following is a 106-amino-acid chain: N(4)-acetylcytidine amidohydrolase (106 aa).

The ASCH domain maps to 9–105 (TFFEFLTPLI…ELYVIEYELI (97 aa)). Lysine 23 functions as the Proton acceptor in the catalytic mechanism. Threonine 26 serves as the catalytic Nucleophile. Residue glutamate 76 is the Proton donor of the active site.

The protein belongs to the N(4)-acetylcytidine amidohydrolase family.

It catalyses the reaction N(4)-acetylcytidine + H2O = cytidine + acetate + H(+). The enzyme catalyses N(4)-acetyl-2'-deoxycytidine + H2O = 2'-deoxycytidine + acetate + H(+). It carries out the reaction N(4)-acetylcytosine + H2O = cytosine + acetate + H(+). In terms of biological role, catalyzes the hydrolysis of N(4)-acetylcytidine (ac4C). The polypeptide is N(4)-acetylcytidine amidohydrolase (Vibrio campbellii (strain ATCC BAA-1116)).